The chain runs to 137 residues: Large-conductance mechanosensitive channel (137 aa).

Helical transmembrane passes span A9–F29 and I79–I99.

Belongs to the MscL family. Homopentamer.

The protein resides in the cell inner membrane. In terms of biological role, channel that opens in response to stretch forces in the membrane lipid bilayer. May participate in the regulation of osmotic pressure changes within the cell. This Pseudomonas aeruginosa (strain UCBPP-PA14) protein is Large-conductance mechanosensitive channel.